A 445-amino-acid polypeptide reads, in one-letter code: Enolase 2 (445 aa).

2 residues coordinate substrate: H164 and E173. The Proton donor role is filled by E216. Residues D251, E301, and D328 each coordinate Mg(2+). Positions 301 and 328 each coordinate substrate. K353 serves as the catalytic Proton acceptor. Substrate is bound by residues 380 to 383 (SHRS) and K404.

The protein belongs to the enolase family. As to quaternary structure, homodimer. It depends on Mg(2+) as a cofactor.

Its subcellular location is the cytoplasm. The catalysed reaction is (2R)-2-phosphoglycerate = phosphoenolpyruvate + H2O. It participates in carbohydrate degradation; glycolysis; pyruvate from D-glyceraldehyde 3-phosphate: step 4/5. In Hevea brasiliensis (Para rubber tree), this protein is Enolase 2 (ENO2).